A 313-amino-acid polypeptide reads, in one-letter code: Ornithine carbamoyltransferase (313 aa).

Carbamoyl phosphate contacts are provided by residues 57 to 60 (STRT), Arg108, and 135 to 138 (HPTQ). Residues Asn167, Asp231, and 235-236 (SM) contribute to the L-ornithine site. Residues 272–273 (CL) and Arg300 each bind carbamoyl phosphate.

It belongs to the aspartate/ornithine carbamoyltransferase superfamily. OTCase family.

The protein localises to the cytoplasm. The enzyme catalyses carbamoyl phosphate + L-ornithine = L-citrulline + phosphate + H(+). Its pathway is amino-acid biosynthesis; L-arginine biosynthesis; L-arginine from L-ornithine and carbamoyl phosphate: step 1/3. Its function is as follows. Reversibly catalyzes the transfer of the carbamoyl group from carbamoyl phosphate (CP) to the N(epsilon) atom of ornithine (ORN) to produce L-citrulline. This is Ornithine carbamoyltransferase from Thermotoga petrophila (strain ATCC BAA-488 / DSM 13995 / JCM 10881 / RKU-1).